Here is a 403-residue protein sequence, read N- to C-terminus: Imidazolonepropionase (403 aa).

Fe(3+) is bound by residues His68 and His70. Residues His68 and His70 each contribute to the Zn(2+) site. Arg77, Tyr140, and His173 together coordinate 4-imidazolone-5-propanoate. Tyr140 lines the N-formimidoyl-L-glutamate pocket. His238 serves as a coordination point for Fe(3+). Position 238 (His238) interacts with Zn(2+). Gln241 is a 4-imidazolone-5-propanoate binding site. Asp313 is a binding site for Fe(3+). Asp313 contacts Zn(2+). Residues Asn315 and Gly317 each contribute to the N-formimidoyl-L-glutamate site. Ser318 provides a ligand contact to 4-imidazolone-5-propanoate.

It belongs to the metallo-dependent hydrolases superfamily. HutI family. The cofactor is Zn(2+). It depends on Fe(3+) as a cofactor.

The protein localises to the cytoplasm. It catalyses the reaction 4-imidazolone-5-propanoate + H2O = N-formimidoyl-L-glutamate. It functions in the pathway amino-acid degradation; L-histidine degradation into L-glutamate; N-formimidoyl-L-glutamate from L-histidine: step 3/3. Functionally, catalyzes the hydrolytic cleavage of the carbon-nitrogen bond in imidazolone-5-propanoate to yield N-formimidoyl-L-glutamate. It is the third step in the universal histidine degradation pathway. The chain is Imidazolonepropionase from Hahella chejuensis (strain KCTC 2396).